Here is a 370-residue protein sequence, read N- to C-terminus: Endopolygalacturonase A (370 aa).

The signal sequence occupies residues 1-19 (MPSAKPLFCLATLAGAALA). Positions 20–32 (APAPSRATDFNKR) are excised as a propeptide. A disulfide bond links C35 and C50. 6 PbH1 repeats span residues 162–192 (SDNL…DISE), 193–214 (STYI…AINS), 215–235 (GENI…SIGS), 244–265 (VKNV…RIKT), 273–295 (VEDI…VIEQ), and 307–352 (SNGV…DITG). A disulfide bridge links C209 with C225. H229 is an active-site residue. An N-linked (GlcNAc...) asparagine glycan is attached at N246. Disulfide bonds link C335/C340 and C359/C368.

This sequence belongs to the glycosyl hydrolase 28 family.

Its subcellular location is the secreted. It carries out the reaction (1,4-alpha-D-galacturonosyl)n+m + H2O = (1,4-alpha-D-galacturonosyl)n + (1,4-alpha-D-galacturonosyl)m.. In terms of biological role, involved in maceration and soft-rotting of plant tissue. Hydrolyzes the 1,4-alpha glycosidic bonds of de-esterified pectate in the smooth region of the plant cell wall. In Aspergillus awamori (Black koji mold), this protein is Endopolygalacturonase A (pgaA).